A 158-amino-acid chain; its full sequence is Transcriptional repressor NrdR (158 aa).

A zinc finger spans residues 3–34 (CPFCSFPESRVLDSRPADEGNSIRRRRECGEC). In terms of domain architecture, ATP-cone spans 49–139 (LVVVKKDGRR…VYRQFGDIYS (91 aa)).

It belongs to the NrdR family. Zn(2+) serves as cofactor.

Its function is as follows. Negatively regulates transcription of bacterial ribonucleotide reductase nrd genes and operons by binding to NrdR-boxes. This is Transcriptional repressor NrdR from Desulforamulus reducens (strain ATCC BAA-1160 / DSM 100696 / MI-1) (Desulfotomaculum reducens).